We begin with the raw amino-acid sequence, 125 residues long: Protein MGF 110-4L (125 aa).

Positions 1 to 29 are cleaved as a signal peptide; that stretch reads MLVVFFLGILGLLANQILGLPTQAGGHLR. N65 carries an N-linked (GlcNAc...) asparagine; by host glycan. Residues 122–125 carry the Prevents secretion from ER motif; sequence KEDL.

The protein belongs to the asfivirus MGF 110 family.

The protein localises to the virion. Its subcellular location is the host endoplasmic reticulum-Golgi intermediate compartment. Functionally, causes the redistribution of lumenal ER protein to an enlarged ERGIC compartment. This is Protein MGF 110-4L from Ornithodoros (relapsing fever ticks).